We begin with the raw amino-acid sequence, 640 residues long: Threonine--tRNA ligase (640 aa).

The TGS domain occupies 1 to 59 (MKIKVVLPDGSEREYEKGTKPMEIAREVGIKKVIGAVVDEELWDLKRPLERDCRIRFVT). The tract at residues 240–531 (DHRKLGPQLE…LIEHFAGAFP (292 aa)) is catalytic. Residues C332, H383, and H508 each contribute to the Zn(2+) site.

It belongs to the class-II aminoacyl-tRNA synthetase family. Homodimer. Zn(2+) serves as cofactor.

It is found in the cytoplasm. The enzyme catalyses tRNA(Thr) + L-threonine + ATP = L-threonyl-tRNA(Thr) + AMP + diphosphate + H(+). Functionally, catalyzes the attachment of threonine to tRNA(Thr) in a two-step reaction: L-threonine is first activated by ATP to form Thr-AMP and then transferred to the acceptor end of tRNA(Thr). Also edits incorrectly charged L-seryl-tRNA(Thr). This is Threonine--tRNA ligase from Thermotoga neapolitana (strain ATCC 49049 / DSM 4359 / NBRC 107923 / NS-E).